Consider the following 214-residue polypeptide: Ribosomal RNA small subunit methyltransferase G (214 aa).

S-adenosyl-L-methionine-binding positions include Gly-81, Met-86, 132–133 (VE), and Arg-147.

This sequence belongs to the methyltransferase superfamily. RNA methyltransferase RsmG family.

The protein resides in the cytoplasm. The enzyme catalyses guanosine(527) in 16S rRNA + S-adenosyl-L-methionine = N(7)-methylguanosine(527) in 16S rRNA + S-adenosyl-L-homocysteine. Functionally, specifically methylates the N7 position of guanine in position 527 of 16S rRNA. In Pseudomonas fluorescens (strain Pf0-1), this protein is Ribosomal RNA small subunit methyltransferase G.